Reading from the N-terminus, the 106-residue chain is Putative membrane protein insertion efficiency factor (106 aa).

It belongs to the UPF0161 family.

It is found in the cell inner membrane. Its function is as follows. Could be involved in insertion of integral membrane proteins into the membrane. The chain is Putative membrane protein insertion efficiency factor from Acinetobacter baylyi (strain ATCC 33305 / BD413 / ADP1).